Consider the following 264-residue polypeptide: Thiazole synthase (264 aa).

K101 acts as the Schiff-base intermediate with DXP in catalysis. 1-deoxy-D-xylulose 5-phosphate contacts are provided by residues G162, 188–189 (AG), and 210–211 (NT).

This sequence belongs to the ThiG family. In terms of assembly, homotetramer. Forms heterodimers with either ThiH or ThiS.

The protein localises to the cytoplasm. It carries out the reaction [ThiS sulfur-carrier protein]-C-terminal-Gly-aminoethanethioate + 2-iminoacetate + 1-deoxy-D-xylulose 5-phosphate = [ThiS sulfur-carrier protein]-C-terminal Gly-Gly + 2-[(2R,5Z)-2-carboxy-4-methylthiazol-5(2H)-ylidene]ethyl phosphate + 2 H2O + H(+). Its pathway is cofactor biosynthesis; thiamine diphosphate biosynthesis. Catalyzes the rearrangement of 1-deoxy-D-xylulose 5-phosphate (DXP) to produce the thiazole phosphate moiety of thiamine. Sulfur is provided by the thiocarboxylate moiety of the carrier protein ThiS. In vitro, sulfur can be provided by H(2)S. The polypeptide is Thiazole synthase (Chromobacterium violaceum (strain ATCC 12472 / DSM 30191 / JCM 1249 / CCUG 213 / NBRC 12614 / NCIMB 9131 / NCTC 9757 / MK)).